The chain runs to 421 residues: Plant UBX domain-containing protein 5 (421 aa).

The UBA domain maps to 4–45; sequence ETNENLINSFIEITSSSREEANFFLESHTWNLDAAVSTFLDN. Disordered regions lie at residues 46–171 and 292–338; these read DAAA…MMVQ and ENFT…PSRG. The span at 69 to 84 shows a compositional bias: polar residues; it reads QSPSQSHSPDYTPSET. A compositionally biased stretch (low complexity) spans 85 to 102; sequence SPSPSRSRSASPSSRAAP. An SEP domain is found at 231 to 295; sequence RIMHTITFWL…DLVRRGENFT (65 aa). Over residues 312–328 the composition is skewed to low complexity; sequence GASGSGSSSAPQASSAP. A UBX domain is found at 343–420; it reads PAAPTTSIQL…GIANAVVIQK (78 aa).

Interacts with CDC48A (non-hexameric) via its UBX domain.

The sequence is that of Plant UBX domain-containing protein 5 from Arabidopsis thaliana (Mouse-ear cress).